The sequence spans 647 residues: Zinc transporter ZIP4 (647 aa).

Residues 1–22 (MASLVSLELGLLLAVLVVTATA) form the signal peptide. Residues 23 to 327 (SPPAGLLSLL…QDQLSQSERY (305 aa)) are Extracellular-facing. Cystine bridges form between Cys57–Cys62, Cys65–Cys111, and Cys160–Cys195. Residues 236–255 (EAHSDHSHRHRGASSRDPVP) form a disordered region. An N-linked (GlcNAc...) asparagine glycan is attached at Asn261. The cysteines at positions 270 and 309 are disulfide-linked. The chain crosses the membrane as a helical span at residues 328 to 348 (LYGSLATLLICLCAVFGLLLL). The Cytoplasmic segment spans residues 349 to 359 (TCTGCRGVTHY). The chain crosses the membrane as a helical span at residues 360-380 (ILQTFLSLAVGAVTGDAVLHL). At 381 to 402 (TPKVLGLHTHSEEGLSPQPTWR) the chain is on the extracellular side. The helical transmembrane segment at 403–423 (LLAMLAGLYAFFLFENLFNLL) threads the bilayer. Residues 424 to 498 (LPRDPEDLED…LSPELRLLPY (75 aa)) lie on the Cytoplasmic side of the membrane. The Essential for SLC39A4 endocytosis signature appears at 452 to 454 (LQL). The interval 458-484 (ELRQPKPPHEGSRADLVAEESPELLNP) is disordered. The segment covering 460–470 (RQPKPPHEGSR) has biased composition (basic and acidic residues). A helical membrane pass occupies residues 499-518 (MITLGDAVHNFADGLAVGAA). Zn(2+) contacts are provided by His507, Asn508, and Asp511. Residues 519 to 526 (FASSWKTG) lie on the Extracellular side of the membrane. A helical membrane pass occupies residues 527-553 (LATSLAVFCHELPHELGDFAALLHAGL). Positions 536, 537, and 540 each coordinate Zn(2+). Residues 554 to 558 (SVRQA) are Cytoplasmic-facing. A helical membrane pass occupies residues 559 to 579 (LLLNLASALTAFAGLYVALAV). Residues 580–586 (GVSEESE) are Extracellular-facing. Residues 587–607 (AWILAVATGLFLYVALCDMLP) form a helical membrane-spanning segment. Topologically, residues 608 to 617 (AMLKVRDPRP) are cytoplasmic. Residues 618-638 (WLLFLLHNVGLLGGWTVLLLL) traverse the membrane as a helical segment. Residues 639 to 647 (SLYEDDITF) are Extracellular-facing.

The protein belongs to the ZIP transporter (TC 2.A.5) family. As to quaternary structure, homodimer; homodimerization is mediated by the transmembrane domain. Post-translationally, the extracellular N-terminal ectodomain is cleaved when cells are Zn(2+) deficient, N-terminally cleaved SLC39A4 is internalized at a faster rate. In terms of processing, under excess Zn(2+) conditions, SLC39A4 on the cell surface is rapidly endocytosed, ubiquitinated and degraded. Glycosylated. As to expression, highly expressed in kidney, small intestine, stomach, colon, jejunum and duodenum.

The protein localises to the cell membrane. It localises to the recycling endosome membrane. Its subcellular location is the apical cell membrane. It catalyses the reaction Zn(2+)(in) = Zn(2+)(out). The Zn(2+) uniporter activity is regulated by zinc availability. Extracellular acidification stimulated SLC39A4-dependent Zn(2+) uptake. Selective transporter that mediates the uptake of Zn(2+). Plays an essential role for dietary zinc uptake from small intestine. The Zn(2+) uniporter activity is regulated by zinc availability. Also exhibits polyspecific binding and transport of Cu(2+), Cd(2+) and possibly Ni(2+) but at higher concentrations. This chain is Zinc transporter ZIP4, found in Homo sapiens (Human).